Consider the following 316-residue polypeptide: NADH-quinone oxidoreductase subunit H (316 aa).

The next 8 membrane-spanning stretches (helical) occupy residues 6–26 (PAVV…LIWV), 74–94 (FVIA…VVPF), 98–118 (VGVI…SLAV), 145–165 (ISYE…AGSF), 177–197 (GWYV…AVAE), 233–253 (YLGI…GWLG), 256–276 (FLPP…FFIL), and 296–316 (VMLP…LSVP).

This sequence belongs to the complex I subunit 1 family. As to quaternary structure, NDH-1 is composed of 14 different subunits. Subunits NuoA, H, J, K, L, M, N constitute the membrane sector of the complex.

It is found in the cell inner membrane. It carries out the reaction a quinone + NADH + 5 H(+)(in) = a quinol + NAD(+) + 4 H(+)(out). Its function is as follows. NDH-1 shuttles electrons from NADH, via FMN and iron-sulfur (Fe-S) centers, to quinones in the respiratory chain. The immediate electron acceptor for the enzyme in this species is believed to be ubiquinone. Couples the redox reaction to proton translocation (for every two electrons transferred, four hydrogen ions are translocated across the cytoplasmic membrane), and thus conserves the redox energy in a proton gradient. This subunit may bind ubiquinone. The chain is NADH-quinone oxidoreductase subunit H from Methylococcus capsulatus (strain ATCC 33009 / NCIMB 11132 / Bath).